The sequence spans 254 residues: tRNA uridine(34) hydroxylase (254 aa).

Residues 123-217 (QDPNVILLDT…YLESIPESES (95 aa)) form the Rhodanese domain. Catalysis depends on cysteine 177, which acts as the Cysteine persulfide intermediate.

It belongs to the TrhO family.

It carries out the reaction uridine(34) in tRNA + AH2 + O2 = 5-hydroxyuridine(34) in tRNA + A + H2O. Functionally, catalyzes oxygen-dependent 5-hydroxyuridine (ho5U) modification at position 34 in tRNAs. This Legionella pneumophila (strain Paris) protein is tRNA uridine(34) hydroxylase.